We begin with the raw amino-acid sequence, 387 residues long: Delta(12)-acyl-lipid-desaturase (387 aa).

The tract at residues 1–31 (MGAGGRMTVPNKWEGEGDEKSQKPVQRVPSA) is disordered. Residues 13-22 (WEGEGDEKSQ) are compositionally biased toward basic and acidic residues. A run of 2 helical transmembrane segments spans residues 58–78 (SYVL…TTYI) and 88–108 (AAWP…WVIA). A Histidine box-1 motif is present at residues 109–113 (HECGH). The chain crosses the membrane as a helical span at residues 121-141 (WVDDCVGLVLHSALLVPYFSW). The Histidine box-2 signature appears at 145 to 149 (HRRHH). 3 helical membrane passes run 183–203 (VMTL…LNVS), 229–249 (IYIS…IAAA), and 251–271 (GLAW…AFLV). Positions 319 to 323 (HVAHH) match the Histidine box-3 motif.

It belongs to the fatty acid desaturase type 1 family.

Its subcellular location is the membrane. It functions in the pathway lipid metabolism; polyunsaturated fatty acid biosynthesis. Functionally, delta(12)-fatty acid desaturase producing in a heterologous system linoleic acid (18:2(9Z,12Z)) and to a lower extent hexadecadienoic acid (16:2(9Z,12Z)). This is Delta(12)-acyl-lipid-desaturase from Punica granatum (Pomegranate).